The primary structure comprises 77 residues: Putative snRNP Sm-like protein (77 aa).

The Sm domain occupies 8-77 (PTLRMMLDYV…DSVVVITPAA (70 aa)).

Belongs to the snRNP Sm proteins family.

The chain is Putative snRNP Sm-like protein from Aeropyrum pernix (strain ATCC 700893 / DSM 11879 / JCM 9820 / NBRC 100138 / K1).